The following is a 123-amino-acid chain: Protein Rev (123 aa).

Phosphoserine; by host CK2 is present on residues Ser5 and Ser8. Residues 18–26 are homomultimerization; the sequence is IIKILYQSN. 2 disordered regions span residues 24-49 and 82-123; these read QSNP…RARQ and TLDS…GAKN. The short motif at 34–50 is the Nuclear localization signal and RNA-binding (RRE) element; the sequence is SRQARRNRRRRWRARQR. The span at 36-49 shows a compositional bias: basic residues; the sequence is QARRNRRRRWRARQ. Positions 73–84 match the Nuclear export signal and binding to XPO1 motif; the sequence is LPLPPIERLTLD. The span at 97 to 112 shows a compositional bias: polar residues; the sequence is PQGTETGTGSPNTPEG.

It belongs to the HIV-1 REV protein family. Homomultimer; when bound to the RRE. Multimeric assembly is essential for activity and may involve XPO1. Binds to human KPNB1, XPO1, TNPO1, RANBP5 and IPO7. Interacts with the viral Integrase. Interacts with human KHDRBS1. Interacts with human NAP1; this interaction decreases Rev multimerization and stimulates its activity. Interacts with human DEAD-box helicases DDX3 and DDX24; these interactions may serve for viral RNA export to the cytoplasm and packaging, respectively. Interacts with human PSIP1; this interaction may inhibit HIV-1 DNA integration by promoting dissociation of the Integrase-LEDGF/p75 complex. Asymmetrically arginine dimethylated at one site by host PRMT6. Methylation impairs the RNA-binding activity and export of viral RNA from the nucleus to the cytoplasm. Post-translationally, phosphorylated by protein kinase CK2. Presence of, and maybe binding to the N-terminus of the regulatory beta subunit of CK2 is necessary for CK2-mediated Rev's phosphorylation.

The protein resides in the host nucleus. It is found in the host nucleolus. The protein localises to the host cytoplasm. Escorts unspliced or incompletely spliced viral pre-mRNAs (late transcripts) out of the nucleus of infected cells. These pre-mRNAs carry a recognition sequence called Rev responsive element (RRE) located in the env gene, that is not present in fully spliced viral mRNAs (early transcripts). This function is essential since most viral proteins are translated from unspliced or partially spliced pre-mRNAs which cannot exit the nucleus by the pathway used by fully processed cellular mRNAs. Rev itself is translated from a fully spliced mRNA that readily exits the nucleus. Rev's nuclear localization signal (NLS) binds directly to KPNB1/Importin beta-1 without previous binding to KPNA1/Importin alpha-1. KPNB1 binds to the GDP bound form of RAN (Ran-GDP) and targets Rev to the nucleus. In the nucleus, the conversion from Ran-GDP to Ran-GTP dissociates Rev from KPNB1 and allows Rev's binding to the RRE in viral pre-mRNAs. Rev multimerization on the RRE via cooperative assembly exposes its nuclear export signal (NES) to the surface. Rev can then form a complex with XPO1/CRM1 and Ran-GTP, leading to nuclear export of the complex. Conversion from Ran-GTP to Ran-GDP mediates dissociation of the Rev/RRE/XPO1/RAN complex, so that Rev can return to the nucleus for a subsequent round of export. Beside KPNB1, also seems to interact with TNPO1/Transportin-1, RANBP5/IPO5 and IPO7/RANBP7 for nuclear import. The nucleoporin-like HRB/RIP is an essential cofactor that probably indirectly interacts with Rev to release HIV RNAs from the perinuclear region to the cytoplasm. This Simian immunodeficiency virus (isolate MB66) (SIV-cpz) protein is Protein Rev.